A 133-amino-acid polypeptide reads, in one-letter code: Large ribosomal subunit protein uL15 (133 aa).

The interval 1–60 (MALENLKPAQGSTKDRKRVGRGQGSGMGKTSTRGGKGQTARTGYKAKRGFEGGQQPLQRR) is disordered.

It belongs to the universal ribosomal protein uL15 family. Part of the 50S ribosomal subunit.

In terms of biological role, binds to the 23S rRNA. The sequence is that of Large ribosomal subunit protein uL15 from Wolinella succinogenes (strain ATCC 29543 / DSM 1740 / CCUG 13145 / JCM 31913 / LMG 7466 / NCTC 11488 / FDC 602W) (Vibrio succinogenes).